A 160-amino-acid polypeptide reads, in one-letter code: Ribosomal RNA large subunit methyltransferase H (160 aa).

Glycine 108 serves as a coordination point for S-adenosyl-L-methionine.

It belongs to the RNA methyltransferase RlmH family. As to quaternary structure, homodimer.

It localises to the cytoplasm. The catalysed reaction is pseudouridine(1915) in 23S rRNA + S-adenosyl-L-methionine = N(3)-methylpseudouridine(1915) in 23S rRNA + S-adenosyl-L-homocysteine + H(+). Functionally, specifically methylates the pseudouridine at position 1915 (m3Psi1915) in 23S rRNA. This Rhodopseudomonas palustris (strain BisA53) protein is Ribosomal RNA large subunit methyltransferase H.